A 126-amino-acid polypeptide reads, in one-letter code: 3-aminoacrylate deaminase RutC (126 aa).

Belongs to the RutC family.

It carries out the reaction (Z)-3-aminoacrylate + H2O + H(+) = 3-oxopropanoate + NH4(+). Functionally, involved in pyrimidine catabolism. Catalyzes the deamination of 3-aminoacrylate to malonic semialdehyde, a reaction that can also occur spontaneously. RutC may facilitate the reaction and modulate the metabolic fitness, rather than catalyzing essential functions. This is 3-aminoacrylate deaminase RutC from Acinetobacter baylyi (strain ATCC 33305 / BD413 / ADP1).